The chain runs to 301 residues: tRNA dimethylallyltransferase (301 aa).

ATP is bound at residue 9–16; it reads GPTASGKS. 11–16 serves as a coordination point for substrate; sequence TASGKS. Positions 34 to 37 are interaction with substrate tRNA; sequence DSMQ.

The protein belongs to the IPP transferase family. Monomer. Mg(2+) serves as cofactor.

It catalyses the reaction adenosine(37) in tRNA + dimethylallyl diphosphate = N(6)-dimethylallyladenosine(37) in tRNA + diphosphate. Catalyzes the transfer of a dimethylallyl group onto the adenine at position 37 in tRNAs that read codons beginning with uridine, leading to the formation of N6-(dimethylallyl)adenosine (i(6)A). This Corynebacterium efficiens (strain DSM 44549 / YS-314 / AJ 12310 / JCM 11189 / NBRC 100395) protein is tRNA dimethylallyltransferase.